The primary structure comprises 423 residues: Vitamin D3 receptor (423 aa).

Zn(2+) contacts are provided by Cys24, Cys27, Cys41, Cys44, Cys60, Cys66, Cys76, and Cys79. NR C4-type zinc fingers lie at residues 24–44 (CGVCGDRATGFHFNAMTCEGC) and 60–84 (CPFNGDCRITKDNRRHCQACRLKRC). The nuclear receptor DNA-binding region spans 24–89 (CGVCGDRATG…RLKRCVDIGM (66 aa)). Positions 97–126 (DEEVQRKREMIMKRKEEEALKDSLRPKLSE) are hinge. Residues 127 to 419 (EQQHIIAILL…LTPLVLEVFG (293 aa)) form the NR LBD domain. A calcitriol-binding site is contributed by Tyr143. The tract at residues 159-180 (MDGSTGSYSPRPTLSFSGNSSS) is disordered. The span at 171-180 (TLSFSGNSSS) shows a compositional bias: low complexity. Ser233 is a binding site for calcitriol. The tract at residues 242-260 (KMIPGFRDLTSDDQIVLLK) is interaction with coactivator LXXLL motif. 4 residues coordinate calcitriol: Arg270, Ser274, His301, and His393. The 9aaTAD motif lies at 412 to 420 (PLVLEVFGN).

The protein belongs to the nuclear hormone receptor family. NR1 subfamily. In terms of assembly, homodimer in the absence of bound vitamin D3. Heterodimer with RXRA after vitamin D3 binding. Interacts with MED1 and NCOA6. Interacts with MED1, NCOA1, NCOA2, NCOA3 and NCOA6 coactivators, leading to a strong increase of transcription of target genes. Interacts with the corepressor NCOR1. Interacts with SNW1. Interacts with IRX4, the interaction does not affect its transactivation activity. Interacts with CRY1. Interacts with CRY2 in a ligand-dependent manner. In terms of processing, ubiquitinated by UBR5, leading to its degradation: UBR5 specifically recognizes and binds ligand-bound VDR when it is not associated with coactivators (NCOAs). In presence of NCOAs, the UBR5-degron is not accessible, preventing its ubiquitination and degradation. As to expression, detected in intestine and kidney.

It is found in the nucleus. Its subcellular location is the cytoplasm. Functionally, nuclear receptor for calcitriol, the active form of vitamin D3 which mediates the action of this vitamin on cells. Enters the nucleus upon vitamin D3 binding where it forms heterodimers with the retinoid X receptor/RXR. The VDR-RXR heterodimers bind to specific response elements on DNA and activate the transcription of vitamin D3-responsive target genes. Plays a central role in calcium homeostasis. Also functions as a receptor for the secondary bile acid lithocholic acid (LCA) and its metabolites. This is Vitamin D3 receptor (Vdr) from Rattus norvegicus (Rat).